A 142-amino-acid chain; its full sequence is Large ribosomal subunit protein bL19 (142 aa).

It belongs to the bacterial ribosomal protein bL19 family.

Its function is as follows. This protein is located at the 30S-50S ribosomal subunit interface and may play a role in the structure and function of the aminoacyl-tRNA binding site. The protein is Large ribosomal subunit protein bL19 of Psychrobacter cryohalolentis (strain ATCC BAA-1226 / DSM 17306 / VKM B-2378 / K5).